Reading from the N-terminus, the 252-residue chain is Imidazole glycerol phosphate synthase subunit HisF (252 aa).

Catalysis depends on residues Asp11 and Asp130.

The protein belongs to the HisA/HisF family. In terms of assembly, heterodimer of HisH and HisF.

The protein resides in the cytoplasm. It catalyses the reaction 5-[(5-phospho-1-deoxy-D-ribulos-1-ylimino)methylamino]-1-(5-phospho-beta-D-ribosyl)imidazole-4-carboxamide + L-glutamine = D-erythro-1-(imidazol-4-yl)glycerol 3-phosphate + 5-amino-1-(5-phospho-beta-D-ribosyl)imidazole-4-carboxamide + L-glutamate + H(+). Its pathway is amino-acid biosynthesis; L-histidine biosynthesis; L-histidine from 5-phospho-alpha-D-ribose 1-diphosphate: step 5/9. IGPS catalyzes the conversion of PRFAR and glutamine to IGP, AICAR and glutamate. The HisF subunit catalyzes the cyclization activity that produces IGP and AICAR from PRFAR using the ammonia provided by the HisH subunit. The polypeptide is Imidazole glycerol phosphate synthase subunit HisF (Sulfurihydrogenibium sp. (strain YO3AOP1)).